Reading from the N-terminus, the 362-residue chain is Mannan endo-1,4-beta-mannosidase (362 aa).

A signal peptide spans 1-26; it reads MFKKHTISLLIIFLLASAVLAKPIEA. The GH26 domain occupies 38 to 349; sequence QTTKTVMNWL…YHDSWTLNKG (312 aa). Substrate is bound at residue His131. Catalysis depends on Glu193, which acts as the Proton donor. Positions 198 and 268 each coordinate substrate. Catalysis depends on Glu292, which acts as the Nucleophile. Residue 324–325 participates in substrate binding; it reads WN.

Belongs to the glycosyl hydrolase 26 family. Homodimer.

The protein localises to the secreted. It catalyses the reaction Random hydrolysis of (1-&gt;4)-beta-D-mannosidic linkages in mannans, galactomannans and glucomannans.. Functionally, involved in the degradation of glucomannan. Catalyzes the endo hydrolysis of beta-1,4-linked mannan, galactomannan and glucomannan. The protein is Mannan endo-1,4-beta-mannosidase of Bacillus subtilis (strain 168).